A 357-amino-acid chain; its full sequence is Heat-inducible transcription repressor HrcA (357 aa).

The protein belongs to the HrcA family.

Its function is as follows. Negative regulator of class I heat shock genes (grpE-dnaK-dnaJ and groELS operons). Prevents heat-shock induction of these operons. The protein is Heat-inducible transcription repressor HrcA of Chlorobium phaeobacteroides (strain DSM 266 / SMG 266 / 2430).